The primary structure comprises 390 residues: tRNA (guanine(9)-N1)-methyltransferase (390 aa).

The disordered stretch occupies residues 1–72 (MDIDEESYLN…RTAQLAEGYA (72 aa)). Over residues 43–59 (ARLEEIKPLKRAAERER) the composition is skewed to basic and acidic residues. In terms of domain architecture, SAM-dependent MTase TRM10-type spans 92-340 (KERKEAQRRI…AVIPIRKYAP (249 aa)). S-adenosyl-L-methionine is bound by residues 246 to 247 (LS), Gly-266, 270 to 274 (DRNRH), Cys-278, Leu-292, and 305 to 307 (KVL). Asp-270 (proton acceptor) is an active-site residue. Residues 343 to 390 (KTKRAKTETKRNEKEEEEVECTSAEGEEDIGVIEESAEVDPEDVFSNQ) are disordered. A compositionally biased stretch (basic and acidic residues) spans 347–356 (AKTETKRNEK). The span at 357–390 (EEEEVECTSAEGEEDIGVIEESAEVDPEDVFSNQ) shows a compositional bias: acidic residues.

The protein belongs to the class IV-like SAM-binding methyltransferase superfamily. TRM10 family. Monomer.

The protein localises to the cytoplasm. It localises to the nucleus. The catalysed reaction is guanosine(9) in tRNA + S-adenosyl-L-methionine = N(1)-methylguanosine(9) in tRNA + S-adenosyl-L-homocysteine + H(+). In terms of biological role, S-adenosyl-L-methionine-dependent guanine N(1)-methyltransferase that catalyzes the formation of N(1)-methylguanine at position 9 (m1G9) in cytoplasmic tRNA. The protein is tRNA (guanine(9)-N1)-methyltransferase of Cryptococcus neoformans var. neoformans serotype D (strain JEC21 / ATCC MYA-565) (Filobasidiella neoformans).